Here is a 346-residue protein sequence, read N- to C-terminus: Nicotinate-nucleotide--dimethylbenzimidazole phosphoribosyltransferase (346 aa).

E312 (proton acceptor) is an active-site residue.

This sequence belongs to the CobT family.

It carries out the reaction 5,6-dimethylbenzimidazole + nicotinate beta-D-ribonucleotide = alpha-ribazole 5'-phosphate + nicotinate + H(+). It functions in the pathway nucleoside biosynthesis; alpha-ribazole biosynthesis; alpha-ribazole from 5,6-dimethylbenzimidazole: step 1/2. Its function is as follows. Catalyzes the synthesis of alpha-ribazole-5'-phosphate from nicotinate mononucleotide (NAMN) and 5,6-dimethylbenzimidazole (DMB). The sequence is that of Nicotinate-nucleotide--dimethylbenzimidazole phosphoribosyltransferase from Cupriavidus necator (strain ATCC 17699 / DSM 428 / KCTC 22496 / NCIMB 10442 / H16 / Stanier 337) (Ralstonia eutropha).